A 372-amino-acid polypeptide reads, in one-letter code: NAD(P)H-quinone oxidoreductase subunit 1 (372 aa).

The next 8 helical transmembrane spans lie at proline 31–leucine 51, proline 65–leucine 85, leucine 97–leucine 117, valine 128–methionine 148, leucine 176–valine 196, phenylalanine 254–tyrosine 276, leucine 304–leucine 324, and phenylalanine 347–proline 367.

Belongs to the complex I subunit 1 family. In terms of assembly, NDH-1 is composed of at least 11 different subunits.

The protein resides in the cellular thylakoid membrane. It carries out the reaction a plastoquinone + NADH + (n+1) H(+)(in) = a plastoquinol + NAD(+) + n H(+)(out). It catalyses the reaction a plastoquinone + NADPH + (n+1) H(+)(in) = a plastoquinol + NADP(+) + n H(+)(out). Functionally, NDH-1 shuttles electrons from an unknown electron donor, via FMN and iron-sulfur (Fe-S) centers, to quinones in the respiratory and/or the photosynthetic chain. The immediate electron acceptor for the enzyme in this species is believed to be plastoquinone. Couples the redox reaction to proton translocation, and thus conserves the redox energy in a proton gradient. The protein is NAD(P)H-quinone oxidoreductase subunit 1 of Leptolyngbya boryana (Plectonema boryanum).